A 255-amino-acid polypeptide reads, in one-letter code: MAASTMSICSSACTNSWQVDDCPESCCELPCGTPSCCAPAPCLTLVCTPVSCVSSPCCQAACEPSACQSGCTSSCTPSCCQQSSCQPACCTSSPCQQACCVPVCCKPVCCVPVCCGASSCCQQSSCQPACCASSSCQQSCRVPVCCKAVCCVPTCSESSSSCCQQSSCQPACCTSSPCQQSCCVSVCCKPVCCKSICCVPVCSGASSPCCQQSSCQPACCTSSCCRPSSSVSLLCRPVCSRPASCSFSSGQKSSC.

22 repeat units span residues 26 to 30, 36 to 40, 57 to 61, 79 to 83, 89 to 93, 99 to 103, 104 to 108, 109 to 113, 114 to 118, 120 to 124, 130 to 134, 145 to 149, 150 to 154, 162 to 166, 172 to 176, 182 to 186, 187 to 191, 192 to 196, 197 to 201, 209 to 213, 219 to 223, and 224 to 228. Residues 26–228 form a 22 X 5 AA repeats of C-C-X(3) region; sequence CCELPCGTPS…CCTSSCCRPS (203 aa).

This sequence belongs to the KRTAP type 10 family. Interacts with hair keratins. As to expression, restricted to a narrow region of the hair fiber cuticle, lying approximately 20 cell layers above the apex of the dermal papilla of the hair root; not detected in any other tissues.

In the hair cortex, hair keratin intermediate filaments are embedded in an interfilamentous matrix, consisting of hair keratin-associated proteins (KRTAP), which are essential for the formation of a rigid and resistant hair shaft through their extensive disulfide bond cross-linking with abundant cysteine residues of hair keratins. The matrix proteins include the high-sulfur and high-glycine-tyrosine keratins. The chain is Keratin-associated protein 10-2 (KRTAP10-2) from Homo sapiens (Human).